Reading from the N-terminus, the 592-residue chain is Aspartate--tRNA(Asp/Asn) ligase (592 aa).

An L-aspartate-binding site is contributed by glutamate 171. The interval 195–198 (QLFK) is aspartate. An L-aspartate-binding site is contributed by arginine 217. ATP-binding positions include 217 to 219 (RDE) and glutamine 226. L-aspartate is bound at residue histidine 447. Glutamate 481 lines the ATP pocket. L-aspartate is bound at residue arginine 488. 533–536 (GLDR) lines the ATP pocket.

It belongs to the class-II aminoacyl-tRNA synthetase family. Type 1 subfamily. As to quaternary structure, homodimer.

It is found in the cytoplasm. The catalysed reaction is tRNA(Asx) + L-aspartate + ATP = L-aspartyl-tRNA(Asx) + AMP + diphosphate. Functionally, aspartyl-tRNA synthetase with relaxed tRNA specificity since it is able to aspartylate not only its cognate tRNA(Asp) but also tRNA(Asn). Reaction proceeds in two steps: L-aspartate is first activated by ATP to form Asp-AMP and then transferred to the acceptor end of tRNA(Asp/Asn). This chain is Aspartate--tRNA(Asp/Asn) ligase, found in Psychromonas ingrahamii (strain DSM 17664 / CCUG 51855 / 37).